A 597-amino-acid polypeptide reads, in one-letter code: MKHIRNFSIIAHIDHGKSTLSDRLIQVCGGLSDREMAAQVLDSMDLERERGITIKSQSVTLNYTAKDGETYQLNFIDTPGHVDFAYEVSRSLAACEGALLVVDAGQGVEAQTLANCYTAIEMDLEVVPILNKIDLPAADPERVAEEIEEIVGIDAMEATRCSAKTGIGVDDVLENIVSAIPAPEGDPDAPLQALIIDSWFDNYLGVVSLVRIKNGSLKKNDKIKVMSTGQTWGVDRLGIFTPKQVDTDVLRTGEVGWVVCGIKDILGAPVGDTLTLAKNGSEKPLPGFKKVKPQVYAGLFPVSSDDYENFRDALGKLSLNDASLFYEPENSAALGFGFRCGFLGMLHMEIIQERLEREYDLDLITTAPTVVYEVEQTNGETMYVDSPAKLPAVNDIEEIREPISRCNILVPADYLGNVITLCVEKRGVQVDMVYHGNQVAITYDIPMAEVVLDFFDRLKSTSRGYASLDYNFQRFEASNMVRVDVLLNGDKVDALALITHKDQSQTRGRQLVEKMKEFIPRQMFDIAIQAAIGNHIIARSTVKQLRKNVIAKCYGGDVSRKKKLLKKQKEGKKRMKQIGNVELPQEAFLAILHVGKD.

In terms of domain architecture, tr-type G spans 2-184; the sequence is KHIRNFSIIA…NIVSAIPAPE (183 aa). GTP contacts are provided by residues 14–19 and 131–134; these read DHGKST and NKID.

Belongs to the TRAFAC class translation factor GTPase superfamily. Classic translation factor GTPase family. LepA subfamily.

It is found in the cell inner membrane. The enzyme catalyses GTP + H2O = GDP + phosphate + H(+). Required for accurate and efficient protein synthesis under certain stress conditions. May act as a fidelity factor of the translation reaction, by catalyzing a one-codon backward translocation of tRNAs on improperly translocated ribosomes. Back-translocation proceeds from a post-translocation (POST) complex to a pre-translocation (PRE) complex, thus giving elongation factor G a second chance to translocate the tRNAs correctly. Binds to ribosomes in a GTP-dependent manner. This is Elongation factor 4 from Vibrio campbellii (strain ATCC BAA-1116).